Reading from the N-terminus, the 191-residue chain is Thymidine kinase (191 aa).

ATP is bound by residues glycine 9–threonine 16 and aspartate 85–glutamine 88. The active-site Proton acceptor is the glutamate 86. The Zn(2+) site is built by cysteine 143, cysteine 146, cysteine 181, and cysteine 184.

The protein belongs to the thymidine kinase family. Homotetramer.

It localises to the cytoplasm. It catalyses the reaction thymidine + ATP = dTMP + ADP + H(+). The sequence is that of Thymidine kinase from Listeria monocytogenes serotype 4b (strain F2365).